We begin with the raw amino-acid sequence, 177 residues long: Large ribosomal subunit protein uL6 (177 aa).

It belongs to the universal ribosomal protein uL6 family. As to quaternary structure, part of the 50S ribosomal subunit.

Its function is as follows. This protein binds to the 23S rRNA, and is important in its secondary structure. It is located near the subunit interface in the base of the L7/L12 stalk, and near the tRNA binding site of the peptidyltransferase center. This is Large ribosomal subunit protein uL6 from Alteromonas mediterranea (strain DSM 17117 / CIP 110805 / LMG 28347 / Deep ecotype).